Consider the following 168-residue polypeptide: Small ribosomal subunit protein uS5 (168 aa).

Residues 13-76 enclose the S5 DRBM domain; that stretch reads LKEQVVDIKR…EDAKKNLIHV (64 aa).

Belongs to the universal ribosomal protein uS5 family. In terms of assembly, part of the 30S ribosomal subunit. Contacts proteins S4 and S8.

Its function is as follows. With S4 and S12 plays an important role in translational accuracy. Functionally, located at the back of the 30S subunit body where it stabilizes the conformation of the head with respect to the body. This is Small ribosomal subunit protein uS5 from Alkaliphilus oremlandii (strain OhILAs) (Clostridium oremlandii (strain OhILAs)).